A 162-amino-acid polypeptide reads, in one-letter code: Probable chemoreceptor glutamine deamidase CheD (162 aa).

It belongs to the CheD family.

It carries out the reaction L-glutaminyl-[protein] + H2O = L-glutamyl-[protein] + NH4(+). In terms of biological role, probably deamidates glutamine residues to glutamate on methyl-accepting chemotaxis receptors (MCPs), playing an important role in chemotaxis. In Pyrococcus horikoshii (strain ATCC 700860 / DSM 12428 / JCM 9974 / NBRC 100139 / OT-3), this protein is Probable chemoreceptor glutamine deamidase CheD.